The sequence spans 523 residues: NAD(P)H-quinone oxidoreductase subunit 2 (523 aa).

13 consecutive transmembrane segments (helical) span residues 30–50 (VGPEAAVLVAMIATLLVDLAG), 57–77 (WVPPICYAGLGSALVLLALQW), 94–114 (LAIAFRAVVALSTLLSLLISW), 128–148 (AAILLAATLGGMLLCGATDLV), 182–202 (LLVGSAAAAVFLYGASLLYGL), 223–243 (AALALVFVLATVAFKIAAVPF), 255–275 (PTPVVAFLSVGSKAAGFALAL), 291–311 (LLFTVLAILSMTLGNVVALAQ), 317–337 (MLAYSSIGQAGFVMIGLVCGT), 345–365 (VLYMATYLFMNLGAFACIILF), 389–409 (LGLSLCLLSLGGIPPMLGFFG), 424–444 (VLVVVGLVTSVISIYYYIGVI), and 477–497 (VALVLCVLVTAVGGILSNPLF).

Belongs to the complex I subunit 2 family. In terms of assembly, NDH-1 can be composed of about 15 different subunits; different subcomplexes with different compositions have been identified which probably have different functions.

The protein localises to the cellular thylakoid membrane. The enzyme catalyses a plastoquinone + NADH + (n+1) H(+)(in) = a plastoquinol + NAD(+) + n H(+)(out). It carries out the reaction a plastoquinone + NADPH + (n+1) H(+)(in) = a plastoquinol + NADP(+) + n H(+)(out). In terms of biological role, NDH-1 shuttles electrons from an unknown electron donor, via FMN and iron-sulfur (Fe-S) centers, to quinones in the respiratory and/or the photosynthetic chain. The immediate electron acceptor for the enzyme in this species is believed to be plastoquinone. Couples the redox reaction to proton translocation, and thus conserves the redox energy in a proton gradient. Cyanobacterial NDH-1 also plays a role in inorganic carbon-concentration. This chain is NAD(P)H-quinone oxidoreductase subunit 2, found in Synechococcus sp. (strain CC9311).